The sequence spans 513 residues: Secreted LysM effector Vd6LysM (513 aa).

The N-terminal stretch at 1 to 19 (MSFIKSLLLAAAAVASVSA) is a signal peptide. LysM domains are found at residues 38–85 (SYWV…SYCV), 136–182 (KFHW…NVCV), 219–265 (KFHW…QVCV), and 302–348 (KFHW…QVCV). Positions 357–367 (TTTRPPTTTAP) are enriched in low complexity. Residues 357–377 (TTTRPPTTTAPGNGVSTPQPT) form a disordered region. 2 LysM domains span residues 387–433 (KFHW…NVCV) and 465–511 (KFHW…NVCV).

The protein belongs to the secreted LysM effector family.

In terms of biological role, might have a role in sequestration of chitin oligosaccharides (breakdown products of fungal cell walls that are released during invasion and act as triggers of host immunity) to dampen host defense. Does not play an important role during host colonization. The polypeptide is Secreted LysM effector Vd6LysM (Verticillium dahliae (strain VdLs.17 / ATCC MYA-4575 / FGSC 10137) (Verticillium wilt)).